The primary structure comprises 303 residues: uncharacterized protein (303 aa).

An N-terminal signal peptide occupies residues methionine 1–serine 24. Residue asparagine 116 is glycosylated (N-linked (GlcNAc...) asparagine). The interval phenylalanine 124–asparagine 179 is disordered. Residues aspartate 135–glutamate 149 show a composition bias toward acidic residues. A compositionally biased stretch (basic residues) spans lysine 155–lysine 164. Positions alanine 167–proline 178 are enriched in polar residues.

This is an uncharacterized protein from Caenorhabditis elegans.